The primary structure comprises 154 residues: Avirulence protein ATR13 (154 aa).

The signal sequence occupies residues 1-19 (MRLVHAVLLPGIIVFVSNG). Positions 38–41 (RQLR) match the RxLR motif. Residues 50 to 92 (LSRASFGLGKAQDPLDKFFSKIIFSGKPIETSYSAKGIHEKII) form a leucine heptad repeat region region. The segment at 93–103 (EAHDLHVSKSK) is single repeat region. Residues 104 to 154 (NAPIQYASVMEYLKKTYPGPDIERIVSTLERHDEVGAKDLGAKLRDALDRQ) are highly variable C-terminus domain.

It belongs to the RxLR effector family.

Its subcellular location is the secreted. The protein localises to the host cytoplasm. Secreted effector that acts as an elicitor of hypersensitive response (HR) specifically on plants carrying defense protein RPP13. Recognition of ATR13 by RPP13 initiates defense responses that are effective against oomycete, bacterial and viral pathogens. The allele ATR13-Emco5 recognizes RPP13-Nd, the RPP13 defense protein from Arabidopsis thaliana ecotype Niederzenz. The polypeptide is Avirulence protein ATR13 (Hyaloperonospora arabidopsidis (Peronospora arabidopsidis)).